Reading from the N-terminus, the 205-residue chain is Holliday junction branch migration complex subunit RuvA (205 aa).

Positions 1–64 are domain I; the sequence is MIGRLRGLLV…EDAQLLYGFI (64 aa). Positions 65-143 are domain II; the sequence is TKQERALFRL…SLMEASAGSE (79 aa). The tract at residues 144 to 156 is flexible linker; that stretch reads REFMLKSNYTPAP. The segment at 157 to 205 is domain III; it reads VINTAEEDAIAALLSLGYKPAQASKAVSAVYQDGMDSETLIKSSLKSML.

It belongs to the RuvA family. In terms of assembly, homotetramer. Forms an RuvA(8)-RuvB(12)-Holliday junction (HJ) complex. HJ DNA is sandwiched between 2 RuvA tetramers; dsDNA enters through RuvA and exits via RuvB. An RuvB hexamer assembles on each DNA strand where it exits the tetramer. Each RuvB hexamer is contacted by two RuvA subunits (via domain III) on 2 adjacent RuvB subunits; this complex drives branch migration. In the full resolvosome a probable DNA-RuvA(4)-RuvB(12)-RuvC(2) complex forms which resolves the HJ.

The protein resides in the cytoplasm. Its function is as follows. The RuvA-RuvB-RuvC complex processes Holliday junction (HJ) DNA during genetic recombination and DNA repair, while the RuvA-RuvB complex plays an important role in the rescue of blocked DNA replication forks via replication fork reversal (RFR). RuvA specifically binds to HJ cruciform DNA, conferring on it an open structure. The RuvB hexamer acts as an ATP-dependent pump, pulling dsDNA into and through the RuvAB complex. HJ branch migration allows RuvC to scan DNA until it finds its consensus sequence, where it cleaves and resolves the cruciform DNA. The protein is Holliday junction branch migration complex subunit RuvA of Shewanella sediminis (strain HAW-EB3).